The primary structure comprises 163 residues: Deoxyuridine 5'-triphosphate nucleotidohydrolase (163 aa).

Substrate-binding positions include 78–80, Asn-91, and 95–97; these read RSG and TVD. Positions 140–151 are enriched in basic and acidic residues; the sequence is ERESLNETERGD. Residues 140-163 form a disordered region; that stretch reads ERESLNETERGDGGFGHTGVNSQP.

It belongs to the dUTPase family. Requires Mg(2+) as cofactor.

It carries out the reaction dUTP + H2O = dUMP + diphosphate + H(+). The protein operates within pyrimidine metabolism; dUMP biosynthesis; dUMP from dCTP (dUTP route): step 2/2. In terms of biological role, this enzyme is involved in nucleotide metabolism: it produces dUMP, the immediate precursor of thymidine nucleotides and it decreases the intracellular concentration of dUTP so that uracil cannot be incorporated into DNA. In Heliobacterium modesticaldum (strain ATCC 51547 / Ice1), this protein is Deoxyuridine 5'-triphosphate nucleotidohydrolase.